The sequence spans 484 residues: tRNA sulfurtransferase (484 aa).

Residues R63–Q167 enclose the THUMP domain. Residues L185 to M186, K267, G289, and Q298 each bind ATP. C346 and C457 form a disulfide bridge. A Rhodanese domain is found at A405–P483. The Cysteine persulfide intermediate role is filled by C457.

This sequence belongs to the ThiI family.

The protein localises to the cytoplasm. The enzyme catalyses [ThiI sulfur-carrier protein]-S-sulfanyl-L-cysteine + a uridine in tRNA + 2 reduced [2Fe-2S]-[ferredoxin] + ATP + H(+) = [ThiI sulfur-carrier protein]-L-cysteine + a 4-thiouridine in tRNA + 2 oxidized [2Fe-2S]-[ferredoxin] + AMP + diphosphate. The catalysed reaction is [ThiS sulfur-carrier protein]-C-terminal Gly-Gly-AMP + S-sulfanyl-L-cysteinyl-[cysteine desulfurase] + AH2 = [ThiS sulfur-carrier protein]-C-terminal-Gly-aminoethanethioate + L-cysteinyl-[cysteine desulfurase] + A + AMP + 2 H(+). It participates in cofactor biosynthesis; thiamine diphosphate biosynthesis. Functionally, catalyzes the ATP-dependent transfer of a sulfur to tRNA to produce 4-thiouridine in position 8 of tRNAs, which functions as a near-UV photosensor. Also catalyzes the transfer of sulfur to the sulfur carrier protein ThiS, forming ThiS-thiocarboxylate. This is a step in the synthesis of thiazole, in the thiamine biosynthesis pathway. The sulfur is donated as persulfide by IscS. This is tRNA sulfurtransferase from Pseudomonas putida (strain ATCC 47054 / DSM 6125 / CFBP 8728 / NCIMB 11950 / KT2440).